The sequence spans 953 residues: Coatomer subunit beta (953 aa).

An N-acetylthreonine modification is found at threonine 2. 6 HEAT repeats span residues 96-131, 132-168, 240-276, 277-314, 316-353, and 396-433; these read HEMI…KEAE, LLEP…NFEH, SERA…SAPT, AIKA…HPAH, RVLQ…SRNV, and DMAA…RFDN. Residue lysine 494 is modified to N6-acetyllysine.

As to quaternary structure, oligomeric complex that consists of at least the alpha, beta, beta', gamma, delta, epsilon and zeta subunits. Interacts with CAPN8 and PRKCE. Interacts with SCYL1. Interacts with COPG1. Interacts with ARF1 (myristoylated); this interaction is required for binding of COPB1 to Golgi membranes. Interacts (via trunk domain) with ARF1 (via switch I region); the interaction is direct. Interacts with KCNK2 (via N-terminus); this interaction increases the channel-mediated whole cell currents and promotes plasma membrane expression of KCNK2. Interacts with STX17. Interacts with TMEM115. Interacts with TMEM41B. High expression in the lung, kidney, skeletal muscle and small intestine, and lower level of expression in heart, liver, spleen, stomach and fat.

It is found in the cytoplasm. It localises to the golgi apparatus membrane. The protein resides in the cytoplasmic vesicle. The protein localises to the COPI-coated vesicle membrane. Its subcellular location is the cell membrane. It is found in the endoplasmic reticulum-Golgi intermediate compartment. In terms of biological role, the coatomer is a cytosolic protein complex that binds to dilysine motifs and reversibly associates with Golgi non-clathrin-coated vesicles, which further mediate biosynthetic protein transport from the ER, via the Golgi up to the trans Golgi network. Coatomer complex is required for budding from Golgi membranes, and is essential for the retrograde Golgi-to-ER transport of dilysine-tagged proteins. In mammals, the coatomer can only be recruited by membranes associated to ADP-ribosylation factors (ARFs), which are small GTP-binding proteins; the complex also influences the Golgi structural integrity, as well as the processing, activity, and endocytic recycling of LDL receptors. Plays a functional role in facilitating the transport of kappa-type opioid receptor mRNAs into axons and enhances translation of these proteins. Required for limiting lipid storage in lipid droplets. Involved in lipid homeostasis by regulating the presence of perilipin family members PLIN2 and PLIN3 at the lipid droplet surface and promoting the association of adipocyte surface triglyceride lipase (PNPLA2) with the lipid droplet to mediate lipolysis. Involved in the Golgi disassembly and reassembly processes during cell cycle. Involved in autophagy by playing a role in early endosome function. Plays a role in organellar compartmentalization of secretory compartments including endoplasmic reticulum (ER)-Golgi intermediate compartment (ERGIC), Golgi, trans-Golgi network (TGN) and recycling endosomes, and in biosynthetic transport of CAV1. The chain is Coatomer subunit beta from Sus scrofa (Pig).